Reading from the N-terminus, the 867-residue chain is Armadillo repeat-containing protein 2 (867 aa).

Disordered stretches follow at residues 1–115 (MLSP…CFSF) and 214–252 (TSLPSHLKNGGDQGKRHARASSCPSSSDLSRLQTKAVPK). Composition is skewed to polar residues over residues 18 to 28 (PSVSKQKTSAE), 40 to 50 (VRTQRPFTPQE), and 60 to 69 (SSRTSENRPP). 2 stretches are compositionally biased toward low complexity: residues 70–81 (SSFSLHASSFES) and 234–243 (SSCPSSSDLS). 12 ARM repeats span residues 262–301 (IEVDEVFWNTRIVPILRELEKEENIETVCAACTQLHHALE), 304–344 (NMLG…ALKV), 363–403 (EKND…SIKF), 408–449 (LGFL…HLLV), 462–503 (SLVR…KLTS), 506–547 (DCCT…NLTA), 551–589 (QAREQFSKEKGSIQTLLSLFQTFHQLDLHSQKPVGQRGE), 591–616 (HRAQRPPSEAEDVLIKLTRVLANIAI), 619–662 (GVGP…NLSY), 664–705 (QVKN…NLSQ), 707–746 (HDVCDFIVQNNVHRFMMALLDAQHQDICFSACGVLLNLTV), and 748–790 (KDKR…NFSE).

In terms of tissue distribution, expressed at higher level in testis.

Its function is as follows. Required for sperm flagellum axoneme organization and function. Involved in axonemal central pair complex assembly and/or stability. The protein is Armadillo repeat-containing protein 2 of Homo sapiens (Human).